A 616-amino-acid chain; its full sequence is Probable methyltransferase PMT2 (616 aa).

Over 1 to 13 (MALKSSSADGKTR) the chain is Cytoplasmic. The chain crosses the membrane as a helical; Signal-anchor for type II membrane protein span at residues 14–34 (SSVQIFIVFSLCCFFYILGAW). Residues 35–616 (QRSGFGKGDS…YWVTNSTSTH (582 aa)) lie on the Lumenal side of the membrane. N-linked (GlcNAc...) asparagine glycosylation is found at Asn-205 and Asn-611.

It belongs to the methyltransferase superfamily.

It localises to the golgi apparatus membrane. The polypeptide is Probable methyltransferase PMT2 (Arabidopsis thaliana (Mouse-ear cress)).